A 103-amino-acid polypeptide reads, in one-letter code: Integration host factor subunit beta (103 aa).

Belongs to the bacterial histone-like protein family. Heterodimer of an alpha and a beta chain.

In terms of biological role, this protein is one of the two subunits of integration host factor, a specific DNA-binding protein that functions in genetic recombination as well as in transcriptional and translational control. The chain is Integration host factor subunit beta from Sinorhizobium medicae (strain WSM419) (Ensifer medicae).